A 727-amino-acid chain; its full sequence is Glucans biosynthesis glucosyltransferase H (727 aa).

Residues 18 to 38 (SAMPNERPGAMEPQNLSKMPE) form a disordered region. Transmembrane regions (helical) follow at residues 58 to 78 (FLVV…MGAV), 97 to 117 (VNFC…LILL), 278 to 298 (LQQF…GWWV), 408 to 428 (IMAY…LMLA), 460 to 480 (LFYI…LLLL), 496 to 516 (IFSV…MMFI), and 572 to 592 (LLAW…ISAW).

Belongs to the glycosyltransferase 2 family. OpgH subfamily.

It is found in the cell inner membrane. It functions in the pathway glycan metabolism; osmoregulated periplasmic glucan (OPG) biosynthesis. Functionally, involved in the biosynthesis of osmoregulated periplasmic glucans (OPGs). The protein is Glucans biosynthesis glucosyltransferase H of Shewanella baltica (strain OS185).